A 222-amino-acid polypeptide reads, in one-letter code: Large ribosomal subunit protein uL4 (222 aa).

Belongs to the universal ribosomal protein uL4 family. As to quaternary structure, part of the 50S ribosomal subunit.

Functionally, one of the primary rRNA binding proteins, this protein initially binds near the 5'-end of the 23S rRNA. It is important during the early stages of 50S assembly. It makes multiple contacts with different domains of the 23S rRNA in the assembled 50S subunit and ribosome. In terms of biological role, forms part of the polypeptide exit tunnel. This chain is Large ribosomal subunit protein uL4, found in Acidobacterium capsulatum (strain ATCC 51196 / DSM 11244 / BCRC 80197 / JCM 7670 / NBRC 15755 / NCIMB 13165 / 161).